Here is an 807-residue protein sequence, read N- to C-terminus: Lysyl oxidase homolog 3B (807 aa).

Residues 1–24 (MELHQWCRHIIVFLLNVWIPSCFA) form the signal peptide. SRCR domains lie at 49–150 (FRLS…VICK), 175–288 (VRLR…VSCV), 309–409 (TRLK…VRCN), 419–470 (VRIL…LGYA), and 476–579 (VRLS…VICS). Cystine bridges form between C75–C139, C88–C149, C119–C129, C207–C277, C220–C287, C254–C264, C334–C398, C347–C408, and C378–C388. The N-linked (GlcNAc...) asparagine glycan is linked to N272. N-linked (GlcNAc...) asparagine glycosylation occurs at N392. 2 disulfide bridges follow: C514–C578 and C547–C557. The N-linked (GlcNAc...) asparagine glycan is linked to N536. An N-linked (GlcNAc...) asparagine glycan is attached at N679. Positions 688 to 724 (KASFCLEDTDCDEGVSKRYKCANFGEQGITVGCWDLY) form a cross-link, lysine tyrosylquinone (Lys-Tyr). Y724 is subject to 2',4',5'-topaquinone.

The protein belongs to the lysyl oxidase family. Cu cation is required as a cofactor. It depends on lysine tyrosylquinone residue as a cofactor. Post-translationally, the lysine tyrosylquinone cross-link (LTQ) is generated by condensation of the epsilon-amino group of a lysine with a topaquinone produced by oxidation of tyrosine.

Its subcellular location is the secreted. The protein localises to the extracellular space. It localises to the cytoplasm. The protein resides in the nucleus. It catalyses the reaction L-lysyl-[protein] + O2 + H2O = (S)-2-amino-6-oxohexanoyl-[protein] + H2O2 + NH4(+). It carries out the reaction N(6)-acetyl-L-lysyl-[protein] + O2 + H2O = acetamide + (S)-2-amino-6-oxohexanoyl-[protein] + H2O2. In terms of biological role, protein-lysine 6-oxidase that mediates the oxidation of peptidyl lysine residues to allysine in target proteins. Catalyzes the post-translational oxidative deamination of peptidyl lysine residues in precursors of elastin and different types of collagens, a prerequisite in the formation of cross-links between collagens and elastin. Can mediate oxidation of lysine residues that are acetylated. Also able to catalyze deacetylation of lysine residues. Required for maturation of neural crest derived cartilage elements. This Danio rerio (Zebrafish) protein is Lysyl oxidase homolog 3B.